Here is a 90-residue protein sequence, read N- to C-terminus: UPF0237 protein MK1213 (90 aa).

The ACT domain maps to 5-79 (VVTVIGADRP…EELGVDVIVQ (75 aa)).

The protein belongs to the UPF0237 family.

The chain is UPF0237 protein MK1213 from Methanopyrus kandleri (strain AV19 / DSM 6324 / JCM 9639 / NBRC 100938).